The chain runs to 473 residues: Photosystem II CP43 reaction center protein (473 aa).

Residues 1–14 (MKILYSLRRFYHVE) constitute a propeptide that is removed on maturation. At T15 the chain carries N-acetylthreonine. The residue at position 15 (T15) is a Phosphothreonine. 5 helical membrane-spanning segments follow: residues 69-93 (LFEVAHFVPEKPMYEQGLILLPHLA), 134-155 (LLGPETLEESFPFFGYVWKDRN), 178-200 (KALYFGGVYDTWAPGGGDVRKIT), 255-275 (KPFAWARRAFVWSGEAYLSYS), and 291-312 (WFNNTAYSSEFYGPTGPEASQA). E367 serves as a coordination point for [CaMn4O5] cluster. A helical membrane pass occupies residues 447–471 (RARAAAAGFEKGIDRDLEPVLYMNP).

It belongs to the PsbB/PsbC family. PsbC subfamily. As to quaternary structure, PSII is composed of 1 copy each of membrane proteins PsbA, PsbB, PsbC, PsbD, PsbE, PsbF, PsbH, PsbI, PsbJ, PsbK, PsbL, PsbM, PsbT, PsbX, PsbY, PsbZ, Psb30/Ycf12, at least 3 peripheral proteins of the oxygen-evolving complex and a large number of cofactors. It forms dimeric complexes. It depends on Binds multiple chlorophylls and provides some of the ligands for the Ca-4Mn-5O cluster of the oxygen-evolving complex. It may also provide a ligand for a Cl- that is required for oxygen evolution. PSII binds additional chlorophylls, carotenoids and specific lipids. as a cofactor. Phosphorylated on threonine residue(s); phosphorylation increases with increasing light levels.

The protein resides in the plastid. It is found in the chloroplast thylakoid membrane. In terms of biological role, one of the components of the core complex of photosystem II (PSII). It binds chlorophyll and helps catalyze the primary light-induced photochemical processes of PSII. PSII is a light-driven water:plastoquinone oxidoreductase, using light energy to abstract electrons from H(2)O, generating O(2) and a proton gradient subsequently used for ATP formation. This chain is Photosystem II CP43 reaction center protein, found in Secale cereale (Rye).